Reading from the N-terminus, the 437-residue chain is Ribosomal protein uS12 methylthiotransferase RimO (437 aa).

Residues 3 to 118 (KKFYITTLGC…AGKILREKFP (116 aa)) enclose the MTTase N-terminal domain. Residues C12, C48, C81, C157, C161, and C164 each coordinate [4Fe-4S] cluster. The Radical SAM core domain maps to 143–370 (NYSKPYAYVK…RDSHLEILEE (228 aa)). In terms of domain architecture, TRAM spans 373–437 (ESRIGRTYDA…YEYDMNGTWV (65 aa)).

The protein belongs to the methylthiotransferase family. RimO subfamily. [4Fe-4S] cluster is required as a cofactor.

Its subcellular location is the cytoplasm. It carries out the reaction L-aspartate(89)-[ribosomal protein uS12]-hydrogen + (sulfur carrier)-SH + AH2 + 2 S-adenosyl-L-methionine = 3-methylsulfanyl-L-aspartate(89)-[ribosomal protein uS12]-hydrogen + (sulfur carrier)-H + 5'-deoxyadenosine + L-methionine + A + S-adenosyl-L-homocysteine + 2 H(+). In terms of biological role, catalyzes the methylthiolation of an aspartic acid residue of ribosomal protein uS12. This chain is Ribosomal protein uS12 methylthiotransferase RimO, found in Leptospira interrogans serogroup Icterohaemorrhagiae serovar Lai (strain 56601).